The sequence spans 387 residues: Acyl-CoA dehydrogenase FadE29 (387 aa).

Residues 123 to 126 (IGYT), T132, and T158 contribute to the FAD site. Residue E241 is the Proton acceptor of the active site. 367–369 (VNE) provides a ligand contact to FAD.

The protein belongs to the acyl-CoA dehydrogenase family. Heterotetramer composed of FadE28 and FadE29. FAD serves as cofactor.

The enzyme catalyses 3-oxochol-4-en-22-oyl-CoA + A = 3-oxochola-4,17-dien-22-oyl-CoA + AH2. The protein operates within steroid metabolism; cholesterol degradation. Involved in the third cycle of side chain dehydrogenation in the beta-oxidation of cholesterol catabolism. Contributes partly to the virulence by increasing the efficiency of beta-oxidation. Catalyzes the dehydrogenation of 2'-propanoyl-CoA ester side chains of 3-oxo-4-pregnene-20-carboxyl-CoA (3-OPC-CoA) to yield 3-oxo-4,17-pregnadiene-20-carboxyl-CoA (3-OPDC-CoA). Also able to dehydrogenate steroyl-CoA such as 3-oxo-chol-4-en-24-oyl-CoA (3-OCO-CoA), 1beta-(2'-propanoyl-CoA)-3a-alpha-H- 7a-beta-methylhexahydro-4-indanone (indanone-CoA ester), hexahydroindanone and pregenenone. This chain is Acyl-CoA dehydrogenase FadE29 (fadE29), found in Mycobacterium tuberculosis (strain ATCC 25618 / H37Rv).